The following is a 256-amino-acid chain: 5-keto-4-deoxy-D-glucarate aldolase (256 aa).

The active-site Proton acceptor is His50. Substrate is bound at residue Gln151. Residue Glu153 participates in Mg(2+) binding. Substrate contacts are provided by Ser178 and Asp179. A Mg(2+)-binding site is contributed by Asp179.

Belongs to the HpcH/HpaI aldolase family. KDGluc aldolase subfamily. As to quaternary structure, homohexamer; trimer of dimers. The cofactor is Mg(2+).

It catalyses the reaction 5-dehydro-4-deoxy-D-glucarate = 2-hydroxy-3-oxopropanoate + pyruvate. The enzyme catalyses 2-dehydro-3-deoxy-D-glucarate = 2-hydroxy-3-oxopropanoate + pyruvate. Its pathway is carbohydrate acid metabolism; galactarate degradation; D-glycerate from galactarate: step 2/3. Catalyzes the reversible retro-aldol cleavage of both 5-keto-4-deoxy-D-glucarate and 2-keto-3-deoxy-D-glucarate to pyruvate and tartronic semialdehyde. The chain is 5-keto-4-deoxy-D-glucarate aldolase from Salmonella paratyphi C (strain RKS4594).